We begin with the raw amino-acid sequence, 496 residues long: Beta-N-acetylhexosaminidase (496 aa).

The active-site Proton donor is the glutamate 298.

The protein belongs to the glycosyl hydrolase 20 family.

It catalyses the reaction Hydrolysis of terminal non-reducing N-acetyl-D-hexosamine residues in N-acetyl-beta-D-hexosaminides.. The protein operates within glycan degradation; chitin degradation. In terms of biological role, catalyzes the cleavage of beta-N-acetylglucosaminides and beta-N-acetylgalactosaminides. Also catalyzes the hydrolysis of N-acetylchitooligomers. May be involved in chitin degradation. It is not able to cleave beta-glucosides. The sequence is that of Beta-N-acetylhexosaminidase (hex20) from Cellulomonas fimi.